We begin with the raw amino-acid sequence, 378 residues long: tRNA (guanine(26)-N(2))-dimethyltransferase (378 aa).

Residues 4–374 form the Trm1 methyltransferase domain; the sequence is KEVTEGKVRI…KGYEEIIRCV (371 aa). S-adenosyl-L-methionine contacts are provided by R44, R69, D87, D114, and A115. Residues C246, C249, C263, and C266 each coordinate Zn(2+).

It belongs to the class I-like SAM-binding methyltransferase superfamily. Trm1 family.

It carries out the reaction guanosine(26) in tRNA + 2 S-adenosyl-L-methionine = N(2)-dimethylguanosine(26) in tRNA + 2 S-adenosyl-L-homocysteine + 2 H(+). Dimethylates a single guanine residue at position 26 of a number of tRNAs using S-adenosyl-L-methionine as donor of the methyl groups. This is tRNA (guanine(26)-N(2))-dimethyltransferase from Saccharolobus islandicus (strain Y.G.57.14 / Yellowstone #1) (Sulfolobus islandicus).